The chain runs to 606 residues: Polypeptide N-acetylgalactosaminyltransferase 9 (606 aa).

Topologically, residues 1 to 6 (MAVARK) are cytoplasmic. Residues 7 to 29 (IRTLLTVNILVFVGIVLFSVYCR) traverse the membrane as a helical; Signal-anchor for type II membrane protein segment. Topologically, residues 30–606 (LQGRSQELVR…IRNWIKHARH (577 aa)) are lumenal. The interval 43–62 (GGCRPRPATPAPGSPLRSGG) is disordered. Disulfide bonds link C144-C375 and C366-C445. The tract at residues 153–264 (LPQVSVVFIF…TGWAEPALSR (112 aa)) is catalytic subdomain A. Substrate-binding residues include D194 and R225. Mn(2+)-binding residues include D248, H250, and H380. Residues 321-383 (PIRTPAMIGC…PCSRVAHIER (63 aa)) form a catalytic subdomain B region. Positions 383 and 388 each coordinate substrate. N463 carries an N-linked (GlcNAc...) asparagine glycan. The Ricin B-type lectin domain maps to 467–603 (TYGEVRNSKA…KWMIRNWIKH (137 aa)). Cystine bridges form between C480–C496, C528–C543, and C570–C590.

It belongs to the glycosyltransferase 2 family. GalNAc-T subfamily. Requires Mn(2+) as cofactor.

The protein resides in the golgi apparatus membrane. The catalysed reaction is L-seryl-[protein] + UDP-N-acetyl-alpha-D-galactosamine = a 3-O-[N-acetyl-alpha-D-galactosaminyl]-L-seryl-[protein] + UDP + H(+). It catalyses the reaction L-threonyl-[protein] + UDP-N-acetyl-alpha-D-galactosamine = a 3-O-[N-acetyl-alpha-D-galactosaminyl]-L-threonyl-[protein] + UDP + H(+). Its pathway is protein modification; protein glycosylation. Catalyzes the initial reaction in O-linked oligosaccharide biosynthesis, the transfer of an N-acetyl-D-galactosamine residue to a serine or threonine residue on the protein receptor. Does not glycosylate apomucin or SDC3. This chain is Polypeptide N-acetylgalactosaminyltransferase 9 (GALNT9), found in Macaca fascicularis (Crab-eating macaque).